Consider the following 262-residue polypeptide: Thiazole synthase (262 aa).

The Schiff-base intermediate with DXP role is filled by K96. 1-deoxy-D-xylulose 5-phosphate contacts are provided by residues G157, 184–185, and 206–207; these read AG and NT.

Belongs to the ThiG family. As to quaternary structure, homotetramer. Forms heterodimers with either ThiH or ThiS.

The protein resides in the cytoplasm. It carries out the reaction [ThiS sulfur-carrier protein]-C-terminal-Gly-aminoethanethioate + 2-iminoacetate + 1-deoxy-D-xylulose 5-phosphate = [ThiS sulfur-carrier protein]-C-terminal Gly-Gly + 2-[(2R,5Z)-2-carboxy-4-methylthiazol-5(2H)-ylidene]ethyl phosphate + 2 H2O + H(+). It participates in cofactor biosynthesis; thiamine diphosphate biosynthesis. Functionally, catalyzes the rearrangement of 1-deoxy-D-xylulose 5-phosphate (DXP) to produce the thiazole phosphate moiety of thiamine. Sulfur is provided by the thiocarboxylate moiety of the carrier protein ThiS. In vitro, sulfur can be provided by H(2)S. This is Thiazole synthase from Legionella pneumophila (strain Corby).